The following is a 154-amino-acid chain: Large-conductance mechanosensitive channel (154 aa).

The next 2 helical transmembrane spans lie at 14–34 and 86–106; these read VVDL…VNSL and VFIN…FFVV.

The protein belongs to the MscL family. As to quaternary structure, homopentamer.

It localises to the cell membrane. In terms of biological role, channel that opens in response to stretch forces in the membrane lipid bilayer. May participate in the regulation of osmotic pressure changes within the cell. This chain is Large-conductance mechanosensitive channel, found in Dehalococcoides mccartyi (strain CBDB1).